The primary structure comprises 380 residues: Cytochrome b (380 aa).

The next 4 helical transmembrane spans lie at 34 to 54 (FGSL…LLAA), 78 to 99 (WLIR…YLHI), 114 to 134 (WNTG…GYVL), and 179 to 199 (FFTL…IHLT). Residues His-84 and His-98 each coordinate heme b. 2 residues coordinate heme b: His-183 and His-197. His-202 provides a ligand contact to a ubiquinone. 4 consecutive transmembrane segments (helical) span residues 227–247 (TKDI…ALFS), 289–309 (LGGV…PLLH), 321–341 (LSQL…WIGS), and 348–368 (FIII…ILFP).

Belongs to the cytochrome b family. In terms of assembly, the cytochrome bc1 complex contains 11 subunits: 3 respiratory subunits (MT-CYB, CYC1 and UQCRFS1), 2 core proteins (UQCRC1 and UQCRC2) and 6 low-molecular weight proteins (UQCRH/QCR6, UQCRB/QCR7, UQCRQ/QCR8, UQCR10/QCR9, UQCR11/QCR10 and a cleavage product of UQCRFS1). This cytochrome bc1 complex then forms a dimer. Heme b is required as a cofactor.

The protein resides in the mitochondrion inner membrane. Component of the ubiquinol-cytochrome c reductase complex (complex III or cytochrome b-c1 complex) that is part of the mitochondrial respiratory chain. The b-c1 complex mediates electron transfer from ubiquinol to cytochrome c. Contributes to the generation of a proton gradient across the mitochondrial membrane that is then used for ATP synthesis. This Eudyptes chrysocome (Western rockhopper penguin) protein is Cytochrome b (MT-CYB).